We begin with the raw amino-acid sequence, 451 residues long: Adenylyltransferase and sulfurtransferase MOCS3-2 (451 aa).

The tract at residues 42-62 (GEDSDEAEESSNDMPTPQTKL) is disordered. Acidic residues predominate over residues 43 to 52 (EDSDEAEESS). Thr-60 carries the post-translational modification Phosphothreonine. ATP contacts are provided by residues Gly-99, Asp-120, 127–131 (SNLHR), Lys-144, and 188–189 (DN). Positions 229 and 232 each coordinate Zn(2+). Cys-246 (glycyl thioester intermediate; for adenylyltransferase activity) is an active-site residue. 2 residues coordinate Zn(2+): Cys-304 and Cys-307. Residues 353–449 (QSQPHLLLDV…WTGSVDATFP (97 aa)) form the Rhodanese domain. The Cysteine persulfide intermediate; for sulfurtransferase activity role is filled by Cys-408.

The protein in the N-terminal section; belongs to the HesA/MoeB/ThiF family. UBA4 subfamily. It depends on Zn(2+) as a cofactor.

The protein localises to the cytoplasm. It carries out the reaction [molybdopterin-synthase sulfur-carrier protein]-C-terminal Gly-Gly + ATP + H(+) = [molybdopterin-synthase sulfur-carrier protein]-C-terminal Gly-Gly-AMP + diphosphate. It catalyses the reaction [molybdopterin-synthase sulfur-carrier protein]-C-terminal Gly-Gly-AMP + S-sulfanyl-L-cysteinyl-[cysteine desulfurase] + AH2 = [molybdopterin-synthase sulfur-carrier protein]-C-terminal-Gly-aminoethanethioate + L-cysteinyl-[cysteine desulfurase] + A + AMP + 2 H(+). The protein operates within tRNA modification; 5-methoxycarbonylmethyl-2-thiouridine-tRNA biosynthesis. It participates in cofactor biosynthesis; molybdopterin biosynthesis. Functionally, plays a central role in 2-thiolation of mcm(5)S(2)U at tRNA wobble positions of cytosolic tRNA(Lys), tRNA(Glu) and tRNA(Gln). Also essential during biosynthesis of the molybdenum cofactor. Acts by mediating the C-terminal thiocarboxylation of sulfur carriers URM1 and MOCS2A. Its N-terminus first activates URM1 and MOCS2A as acyl-adenylates (-COAMP), then the persulfide sulfur on the catalytic cysteine is transferred to URM1 and MOCS2A to form thiocarboxylation (-COSH) of their C-terminus. The reaction probably involves hydrogen sulfide that is generated from the persulfide intermediate and that acts as a nucleophile towards URM1 and MOCS2A. Subsequently, a transient disulfide bond is formed. Does not use thiosulfate as sulfur donor; NFS1 probably acting as a sulfur donor for thiocarboxylation reactions. This is Adenylyltransferase and sulfurtransferase MOCS3-2 from Drosophila pseudoobscura pseudoobscura (Fruit fly).